We begin with the raw amino-acid sequence, 515 residues long: Maturase K (515 aa).

It belongs to the intron maturase 2 family. MatK subfamily.

Its subcellular location is the plastid. The protein localises to the chloroplast. Its function is as follows. Usually encoded in the trnK tRNA gene intron. Probably assists in splicing its own and other chloroplast group II introns. This Pinus uncinata (Mountain pine) protein is Maturase K.